A 322-amino-acid polypeptide reads, in one-letter code: Lung adenoma susceptibility protein 2 homolog (322 aa).

The first 31 residues, 1 to 31, serve as a signal peptide directing secretion; it reads MAKSKTKHRLCSRESSVSSLLASCSLSDSNS. Over residues 148–157 the composition is skewed to basic residues; the sequence is TNKKNKKCHG. 2 disordered regions span residues 148-175 and 228-248; these read TNKKNKKCHGRLGSSDVEKNPNFQGPST and FKSPIPVNSDDSPQQTSRAKS. The residue at position 161 (Ser-161) is a Phosphoserine. Polar residues predominate over residues 236-247; sequence SDDSPQQTSRAK.

Its subcellular location is the secreted. Its function is as follows. Might play a role in cell proliferation. The sequence is that of Lung adenoma susceptibility protein 2 homolog (LAS2) from Macaca fascicularis (Crab-eating macaque).